Here is a 494-residue protein sequence, read N- to C-terminus: Argininosuccinate synthase, chloroplastic (494 aa).

The transit peptide at 1–73 (MAEISATSFP…SRSCKNQAIR (73 aa)) directs the protein to the chloroplast. Position 74 is an N-acetylalanine (A74). Residues 102 to 110 (AYSGGLDTS) and A129 contribute to the ATP site. Y181 and S186 together coordinate L-citrulline. G211 lines the ATP pocket. L-aspartate-binding residues include T213, N217, and D218. Residue N217 coordinates L-citrulline. The L-citrulline site is built by R221, S270, S279, E355, and Y367.

The protein belongs to the argininosuccinate synthase family. Type 1 subfamily. Homotetramer.

It is found in the plastid. It localises to the chloroplast. It carries out the reaction L-citrulline + L-aspartate + ATP = 2-(N(omega)-L-arginino)succinate + AMP + diphosphate + H(+). The protein operates within amino-acid biosynthesis; L-arginine biosynthesis; L-arginine from L-ornithine and carbamoyl phosphate: step 2/3. The chain is Argininosuccinate synthase, chloroplastic from Arabidopsis thaliana (Mouse-ear cress).